The primary structure comprises 319 residues: Phosphoribosylformylglycinamidine cyclo-ligase (319 aa).

This sequence belongs to the AIR synthase family.

It is found in the cytoplasm. It catalyses the reaction 2-formamido-N(1)-(5-O-phospho-beta-D-ribosyl)acetamidine + ATP = 5-amino-1-(5-phospho-beta-D-ribosyl)imidazole + ADP + phosphate + H(+). The protein operates within purine metabolism; IMP biosynthesis via de novo pathway; 5-amino-1-(5-phospho-D-ribosyl)imidazole from N(2)-formyl-N(1)-(5-phospho-D-ribosyl)glycinamide: step 2/2. This Sulfurisphaera tokodaii (strain DSM 16993 / JCM 10545 / NBRC 100140 / 7) (Sulfolobus tokodaii) protein is Phosphoribosylformylglycinamidine cyclo-ligase.